Reading from the N-terminus, the 246-residue chain is Type III pantothenate kinase (246 aa).

6–13 serves as a coordination point for ATP; sequence DVGNTHSV. 103 to 106 is a binding site for substrate; sequence GADR. Asp105 serves as the catalytic Proton acceptor. Asp125 is a K(+) binding site. Thr128 is an ATP binding site. Substrate is bound at residue Thr179.

It belongs to the type III pantothenate kinase family. In terms of assembly, homodimer. NH4(+) is required as a cofactor. It depends on K(+) as a cofactor.

Its subcellular location is the cytoplasm. It catalyses the reaction (R)-pantothenate + ATP = (R)-4'-phosphopantothenate + ADP + H(+). Its pathway is cofactor biosynthesis; coenzyme A biosynthesis; CoA from (R)-pantothenate: step 1/5. Functionally, catalyzes the phosphorylation of pantothenate (Pan), the first step in CoA biosynthesis. This chain is Type III pantothenate kinase, found in Thermotoga sp. (strain RQ2).